We begin with the raw amino-acid sequence, 94 residues long: UPF0235 protein TON_0641 (94 aa).

The protein belongs to the UPF0235 family.

In Thermococcus onnurineus (strain NA1), this protein is UPF0235 protein TON_0641.